The sequence spans 487 residues: Benzaldehyde dehydrogenase [NAD(+)] (487 aa).

232-237 (GSTQVG) serves as a coordination point for NAD(+). Residues Glu-254 and Cys-288 contribute to the active site.

The protein belongs to the aldehyde dehydrogenase family. Homotetramer.

The enzyme catalyses benzaldehyde + NAD(+) + H2O = benzoate + NADH + 2 H(+). The sequence is that of Benzaldehyde dehydrogenase [NAD(+)] (xylC) from Pseudomonas putida (Arthrobacter siderocapsulatus).